A 366-amino-acid polypeptide reads, in one-letter code: Isopropyl malate dehydrogenase htyC (366 aa).

NADP(+) is bound at residue 71 to 73; sequence VGG. Positions 91 and 130 each coordinate substrate. Mg(2+) contacts are provided by D221, D246, and D250. 277–282 lines the NADP(+) pocket; it reads GCVHGI.

Belongs to the isocitrate and isopropylmalate dehydrogenases family. In terms of assembly, homodimer. It depends on Mg(2+) as a cofactor. Requires Mn(2+) as cofactor.

The enzyme catalyses (2R,3S)-3-isopropylmalate + NAD(+) = 4-methyl-2-oxopentanoate + CO2 + NADH. The protein operates within antifungal biosynthesis. In terms of biological role, isopropyl malate dehydrogenase; part of the gene cluster that mediates the de novo generation of L-homotyrosine from acetyl-CoA and 4-hydroxyphenyl-pyruvate. L-homotyrosine is a building block of echinocandin B, a fungal lipidated cyclic hexapeptide that acts as an antifungal agent. L-homotyrosine 4-hydroxyphenyl-pyruvate first undergoes an aldol-type condensation by htyA with the C-2 of acetyl-CoA followed by the release of CoA to form 2-(4-hydroxybenzyl)-malate. This is followed by isomerization of 2-(4-hydroxy-benzyl)-malate to 3-(4-hydroxybenzyl)-malate by htyD. Thereafter, 3-(4-hydroxybenzyl)-malate undergoes decarboxylation and oxidation to form 2-oxo-4-(4-hydroxybenzyl)butanoic acid, coupled to reduction of NAD(+) to NADH by htyC. The product then undergoes transamination catalyzed by htyB to form L-homotyrosine. This Aspergillus rugulosus (Emericella rugulosa) protein is Isopropyl malate dehydrogenase htyC.